The sequence spans 75 residues: DNA-directed RNA polymerase subunit omega (75 aa).

Belongs to the RNA polymerase subunit omega family. In terms of assembly, in cyanobacteria the RNAP catalytic core is composed of 2 alpha, 1 beta, 1 beta', 1 gamma and 1 omega subunit. When a sigma factor is associated with the core the holoenzyme is formed, which can initiate transcription.

It catalyses the reaction RNA(n) + a ribonucleoside 5'-triphosphate = RNA(n+1) + diphosphate. Promotes RNA polymerase assembly. Latches the N- and C-terminal regions of the beta' subunit thereby facilitating its interaction with the beta and alpha subunits. The sequence is that of DNA-directed RNA polymerase subunit omega from Microcystis aeruginosa (strain NIES-843 / IAM M-2473).